Here is a 659-residue protein sequence, read N- to C-terminus: DNA ligase (659 aa).

NAD(+) is bound by residues 31–35 (DFVYD), 80–81 (SL), and glutamate 109. Residue lysine 111 is the N6-AMP-lysine intermediate of the active site. NAD(+) contacts are provided by arginine 132, glutamate 166, lysine 281, and lysine 305. Positions 398, 401, 416, and 421 each coordinate Zn(2+). In terms of domain architecture, BRCT spans 581 to 659 (VTTHPFNGKT…EATFKVKINE (79 aa)).

It belongs to the NAD-dependent DNA ligase family. LigA subfamily. Requires Mg(2+) as cofactor. Mn(2+) serves as cofactor.

The catalysed reaction is NAD(+) + (deoxyribonucleotide)n-3'-hydroxyl + 5'-phospho-(deoxyribonucleotide)m = (deoxyribonucleotide)n+m + AMP + beta-nicotinamide D-nucleotide.. In terms of biological role, DNA ligase that catalyzes the formation of phosphodiester linkages between 5'-phosphoryl and 3'-hydroxyl groups in double-stranded DNA using NAD as a coenzyme and as the energy source for the reaction. It is essential for DNA replication and repair of damaged DNA. This Acholeplasma laidlawii (strain PG-8A) protein is DNA ligase.